A 118-amino-acid chain; its full sequence is Small ribosomal subunit protein uS13 (118 aa).

Positions H91 to A118 are disordered.

It belongs to the universal ribosomal protein uS13 family. Part of the 30S ribosomal subunit. Forms a loose heterodimer with protein S19. Forms two bridges to the 50S subunit in the 70S ribosome.

In terms of biological role, located at the top of the head of the 30S subunit, it contacts several helices of the 16S rRNA. In the 70S ribosome it contacts the 23S rRNA (bridge B1a) and protein L5 of the 50S subunit (bridge B1b), connecting the 2 subunits; these bridges are implicated in subunit movement. Contacts the tRNAs in the A and P-sites. The protein is Small ribosomal subunit protein uS13 of Francisella tularensis subsp. tularensis (strain FSC 198).